The sequence spans 593 residues: Aspartate--tRNA ligase (593 aa).

An L-aspartate-binding site is contributed by Glu180. The aspartate stretch occupies residues 204–207 (QIFK). An L-aspartate-binding site is contributed by Arg226. Residues 226 to 228 (RDE) and Gln235 contribute to the ATP site. Residue His453 coordinates L-aspartate. Glu487 provides a ligand contact to ATP. Arg494 is a binding site for L-aspartate. 539–542 (GLDR) serves as a coordination point for ATP.

This sequence belongs to the class-II aminoacyl-tRNA synthetase family. Type 1 subfamily. As to quaternary structure, homodimer.

Its subcellular location is the cytoplasm. The catalysed reaction is tRNA(Asp) + L-aspartate + ATP = L-aspartyl-tRNA(Asp) + AMP + diphosphate. Its function is as follows. Catalyzes the attachment of L-aspartate to tRNA(Asp) in a two-step reaction: L-aspartate is first activated by ATP to form Asp-AMP and then transferred to the acceptor end of tRNA(Asp). The protein is Aspartate--tRNA ligase of Clostridium botulinum (strain Loch Maree / Type A3).